The sequence spans 378 residues: Polar flagellin B/D (378 aa).

Coiled-coil stretches lie at residues 103–128 and 311–340; these read SNSK…RIAE and AFQN…IKDT.

The protein belongs to the bacterial flagellin family. In terms of assembly, heteromer of multiple flagellin subunits including FlaA, FlaB/D, FlaC, FlaE and FlaF.

Its subcellular location is the secreted. It is found in the bacterial flagellum. Functionally, flagellin is the subunit protein which polymerizes to form the filaments of bacterial flagella. FlaB/D is not essential for polar flagellar synthesis and swimming motility. Homomer of FlaB/D is not able to form a functional filament. The chain is Polar flagellin B/D (flaB) from Vibrio parahaemolyticus serotype O3:K6 (strain RIMD 2210633).